The sequence spans 552 residues: Alcohol dehydrogenase [acceptor] (552 aa).

3–32 (DYIIVGAGSAGCVLANRLSADPSKRVCLLE) contributes to the FAD binding site. The Proton acceptor role is filled by His469.

Belongs to the GMC oxidoreductase family. FAD is required as a cofactor.

The protein resides in the cell inner membrane. The enzyme catalyses a primary alcohol + A = an aldehyde + AH2. Functionally, converts aliphatic medium-chain-length alcohols into aldehydes. May be linked to the electron transfer chain. The polypeptide is Alcohol dehydrogenase [acceptor] (alkJ) (Pseudomonas putida (Arthrobacter siderocapsulatus)).